We begin with the raw amino-acid sequence, 242 residues long: Putative ABC transporter ATP-binding protein TTE0246 (242 aa).

One can recognise an ABC transporter domain in the interval 5 to 242; it reads FELKNVSYFY…EKLLLKANLI (238 aa). 38-45 provides a ligand contact to ATP; the sequence is GANGSGKS.

It belongs to the ABC transporter superfamily.

It is found in the cell membrane. In terms of biological role, probably part of an ABC transporter complex. Responsible for energy coupling to the transport system. This chain is Putative ABC transporter ATP-binding protein TTE0246, found in Caldanaerobacter subterraneus subsp. tengcongensis (strain DSM 15242 / JCM 11007 / NBRC 100824 / MB4) (Thermoanaerobacter tengcongensis).